Reading from the N-terminus, the 432-residue chain is Competence protein ComFA (432 aa).

Zn(2+)-binding residues include C40, C43, C60, and C63. A Helicase ATP-binding domain is found at 107–257 (LQAVDKQKPT…RLGELKRLNL (151 aa)). 120–127 (AVTGAGKT) contributes to the ATP binding site. Positions 205-208 (DEVD) match the DEAD box motif. A Helicase C-terminal domain is found at 289–432 (KLKSYIEKQR…IQMMNKEAGL (144 aa)).

This sequence belongs to the DEAD box helicase family. In terms of assembly, monomer and dimer in solution. Interacts with DprA and ComFC; ComFA-ComFC form rings about 150 Angstroms in diameter with apparent 6-fold symmetry. It depends on Zn(2+) as a cofactor.

It localises to the cytoplasm. Its function is as follows. Involved in transformation (genetic competence for DNA uptake). DNA uptake is energy dependent, this protein may provide the driving force for DNA uptake. Does not have helicase activity, translocates on single-stranded (ss)DNA in a 5'-3' direction in an ATP-dependent manner, but does not unwind double-stranded (ds)DNA (tested with 5'- and 3'-overhang dsDNA). ATP hydrolysis causes the release of ssDNA from ComFA. A ssDNA-stimulated ATPase; dsDNA does not stimulate ATPase. ATP hydrolysis causes the release of ssDNA from ComFA. ComFC has no effect on ATPase activity. Binds ssDNA but only very poorly to dsDNA in the absence of ATP. Binding to ssDNA does not require free DNA ends. This chain is Competence protein ComFA, found in Streptococcus pneumoniae (strain ATCC BAA-255 / R6).